Reading from the N-terminus, the 933-residue chain is C-1-tetrahydrofolate synthase, cytoplasmic (933 aa).

A methylenetetrahydrofolate dehydrogenase and cyclohydrolase region spans residues 1–303; it reads MWEPQGSLDP…DRLLAPTWPL (303 aa). Residues 51–55 and 98–100 contribute to the substrate site; these read YIRMK and VQM. NADP(+) contacts are provided by residues 170–172 and serine 195; that span reads GRS. 270–274 contacts substrate; the sequence is PGGVG. The formyltetrahydrofolate synthetase stretch occupies residues 304-933; it reads RPLRITPLSP…TKTGEIEGLF (630 aa). 378 to 385 serves as a coordination point for ATP; that stretch reads TPLGEGKS.

This sequence in the N-terminal section; belongs to the tetrahydrofolate dehydrogenase/cyclohydrolase family. In the C-terminal section; belongs to the formate--tetrahydrofolate ligase family. In terms of assembly, homodimer.

It is found in the cytoplasm. The enzyme catalyses (6R)-5,10-methylene-5,6,7,8-tetrahydrofolate + NADP(+) = (6R)-5,10-methenyltetrahydrofolate + NADPH. It carries out the reaction (6R)-5,10-methenyltetrahydrofolate + H2O = (6R)-10-formyltetrahydrofolate + H(+). The catalysed reaction is (6S)-5,6,7,8-tetrahydrofolate + formate + ATP = (6R)-10-formyltetrahydrofolate + ADP + phosphate. Its pathway is one-carbon metabolism; tetrahydrofolate interconversion. This is C-1-tetrahydrofolate synthase, cytoplasmic from Spodoptera frugiperda (Fall armyworm).